Consider the following 724-residue polypeptide: uncharacterized protein (724 aa).

Disordered stretches follow at residues 1–23 (MEDR…IPDN), 166–477 (PDGY…PPRD), 496–517 (EAHD…AHGP), and 532–691 (DHPI…PALS). Composition is skewed to polar residues over residues 227-245 (VSQS…TVNQ) and 270-296 (STTL…TSDA). A compositionally biased stretch (basic and acidic residues) spans 304–322 (TRDHDRYGNGRGPDTDRLE). A compositionally biased stretch (polar residues) spans 403 to 413 (PSSSHSETPNM). Basic and acidic residues-rich tracts occupy residues 550–560 (RNHEFTEDKRL) and 637–657 (LRHD…DLAA). Low complexity predominate over residues 682–691 (RLAAASPALS).

This is an uncharacterized protein from Neurospora crassa (strain ATCC 24698 / 74-OR23-1A / CBS 708.71 / DSM 1257 / FGSC 987).